We begin with the raw amino-acid sequence, 367 residues long: Histidinol-phosphate aminotransferase (367 aa).

Lys-226 bears the N6-(pyridoxal phosphate)lysine mark.

This sequence belongs to the class-II pyridoxal-phosphate-dependent aminotransferase family. Histidinol-phosphate aminotransferase subfamily. As to quaternary structure, homodimer. Requires pyridoxal 5'-phosphate as cofactor.

The enzyme catalyses L-histidinol phosphate + 2-oxoglutarate = 3-(imidazol-4-yl)-2-oxopropyl phosphate + L-glutamate. The protein operates within amino-acid biosynthesis; L-histidine biosynthesis; L-histidine from 5-phospho-alpha-D-ribose 1-diphosphate: step 7/9. The polypeptide is Histidinol-phosphate aminotransferase (Aliarcobacter butzleri (strain RM4018) (Arcobacter butzleri)).